Reading from the N-terminus, the 174-residue chain is Transcription factor bHLH168 (174 aa).

A bHLH domain is found at 14 to 63; sequence SLREQRNLREKERRMRMKHLFSILSSHVSPTRRLPVPQLIDQAVSYMIQL.

It belongs to the bHLH protein family.

Its subcellular location is the nucleus. The polypeptide is Transcription factor bHLH168 (Arabidopsis thaliana (Mouse-ear cress)).